The primary structure comprises 142 residues: Large ribosomal subunit protein uL11 (142 aa).

This sequence belongs to the universal ribosomal protein uL11 family. Part of the ribosomal stalk of the 50S ribosomal subunit. Interacts with L10 and the large rRNA to form the base of the stalk. L10 forms an elongated spine to which L12 dimers bind in a sequential fashion forming a multimeric L10(L12)X complex. One or more lysine residues are methylated.

In terms of biological role, forms part of the ribosomal stalk which helps the ribosome interact with GTP-bound translation factors. The protein is Large ribosomal subunit protein uL11 of Edwardsiella ictaluri (strain 93-146).